The chain runs to 196 residues: ATP-dependent Clp protease proteolytic subunit (196 aa).

Ser-96 serves as the catalytic Nucleophile. Residue His-121 is part of the active site.

It belongs to the peptidase S14 family. Fourteen ClpP subunits assemble into 2 heptameric rings which stack back to back to give a disk-like structure with a central cavity, resembling the structure of eukaryotic proteasomes.

The protein resides in the cytoplasm. It catalyses the reaction Hydrolysis of proteins to small peptides in the presence of ATP and magnesium. alpha-casein is the usual test substrate. In the absence of ATP, only oligopeptides shorter than five residues are hydrolyzed (such as succinyl-Leu-Tyr-|-NHMec, and Leu-Tyr-Leu-|-Tyr-Trp, in which cleavage of the -Tyr-|-Leu- and -Tyr-|-Trp bonds also occurs).. Functionally, cleaves peptides in various proteins in a process that requires ATP hydrolysis. Has a chymotrypsin-like activity. Plays a major role in the degradation of misfolded proteins. This Streptococcus thermophilus (strain CNRZ 1066) protein is ATP-dependent Clp protease proteolytic subunit.